A 423-amino-acid chain; its full sequence is MVNTLKSSQCVHCILEAYPPGAGPVSAIDERWIRIFMPGGETLMIDRRLVYEPGSPCTYHTGLDLVGAHIVPNNSFDFRDVETGRDLSDFRSCDFMEDVHPWFRVLLEITTDRLDGPHRGGETVVINFGRRGVPCGVYLCSHGVTASCITMGPPVQGMPETISITINPFGGWFSWLVLKPAGTGSRKPFANDLTRYLIRTSGFSTAGIDRFETRSPIILYGGGRWVLECVPHLHPTLTVAKESIECALDPGSIVVIWPGPALPVVRHVLETVLVDRVRDLVGTLAANFEDIFVHRVDDRRVTHRWVEIPKNAPRKKLSFTVTGHRPEVLAAMCGGGWRLGHTMPGMGFDTDLKVEPAPGVKLDGPPRQLHPEFLRAAMAKIEPLVAPIESELRGNTSLHAWTITVVALVGRFGILITALESLS.

This is an uncharacterized protein from Ictaluridae (bullhead catfishes).